A 273-amino-acid chain; its full sequence is Phosphate import ATP-binding protein PstB (273 aa).

The ABC transporter domain maps to 19–258 (LSLQNVTISY…FNDTDKIFNA (240 aa)). An ATP-binding site is contributed by 51 to 58 (GPSGCGKS).

The protein belongs to the ABC transporter superfamily. Phosphate importer (TC 3.A.1.7) family. The complex is composed of two ATP-binding proteins (PstB), two transmembrane proteins (PstC and PstA) and a solute-binding protein (PstS).

The protein resides in the cell inner membrane. It catalyses the reaction phosphate(out) + ATP + H2O = ADP + 2 phosphate(in) + H(+). Part of the ABC transporter complex PstSACB involved in phosphate import. Responsible for energy coupling to the transport system. This Synechococcus sp. (strain CC9605) protein is Phosphate import ATP-binding protein PstB.